We begin with the raw amino-acid sequence, 193 residues long: Signal peptidase I T (193 aa).

Residues 1-25 are Cytoplasmic-facing; that stretch reads MTEEKNTNTEKTAKKKTNTYLEWGK. The helical transmembrane segment at 26 to 42 threads the bilayer; that stretch reads AIVIAVLLALLIRHFLF. At 43 to 193 the chain is on the extracellular side; sequence EPYLVEGSSM…FPFNEMRQTK (151 aa). Residues Ser-51 and Lys-93 contribute to the active site.

It belongs to the peptidase S26 family.

The protein localises to the cell membrane. It catalyses the reaction Cleavage of hydrophobic, N-terminal signal or leader sequences from secreted and periplasmic proteins.. This is Signal peptidase I T (sipT) from Bacillus subtilis (strain 168).